The chain runs to 623 residues: (-)-alpha-pinene synthase 1, chloroplastic (623 aa).

The transit peptide at 1-52 directs the protein to the chloroplast; that stretch reads MDLISVLPSASKSCVCLHKPLSSSTHKLKPFCKTIRILGMPRRWKFAGPSMS. Mg(2+) is bound by residues aspartate 374, aspartate 378, and aspartate 526. The DDXXD motif signature appears at 374 to 378; that stretch reads DDMYD.

Belongs to the terpene synthase family. Tpsd subfamily. Requires Mg(2+) as cofactor. The cofactor is Mn(2+).

The protein localises to the plastid. It is found in the chloroplast. It carries out the reaction (2E)-geranyl diphosphate = (1S,5S)-alpha-pinene + diphosphate. The catalysed reaction is (2E)-geranyl diphosphate = (1S,5S)-beta-pinene + diphosphate. The enzyme catalyses (2E)-geranyl diphosphate = (-)-beta-phellandrene + diphosphate. Its pathway is terpene metabolism; oleoresin biosynthesis. The protein operates within secondary metabolite biosynthesis; terpenoid biosynthesis. Functionally, monoterpene synthase (TPS) involved in the biosynthesis of monoterpene natural products included in conifer oleoresin secretions and volatile emissions; these compounds contribute to biotic and abiotic stress defense against herbivores and pathogens. Catalyzes the conversion of (2E)-geranyl diphosphate (GPP) to (-)-alpha-pinene and (-)-beta-pinene, and, to a lower extent, to (-)-beta-phellandrene. The protein is (-)-alpha-pinene synthase 1, chloroplastic of Pinus banksiana (Jack pine).